Here is a 197-residue protein sequence, read N- to C-terminus: Dephospho-CoA kinase (197 aa).

Positions 3 to 197 (ILGLTGSIAM…TGCLVGQGSR (195 aa)) constitute a DPCK domain. Residue 11–16 (AMGKST) coordinates ATP.

Belongs to the CoaE family.

The protein resides in the cytoplasm. It carries out the reaction 3'-dephospho-CoA + ATP = ADP + CoA + H(+). It participates in cofactor biosynthesis; coenzyme A biosynthesis; CoA from (R)-pantothenate: step 5/5. Catalyzes the phosphorylation of the 3'-hydroxyl group of dephosphocoenzyme A to form coenzyme A. The chain is Dephospho-CoA kinase from Zymomonas mobilis subsp. mobilis (strain ATCC 31821 / ZM4 / CP4).